The sequence spans 337 residues: tRNA N(3)-cytidine methyltransferase METTL2 (337 aa).

S-adenosyl-L-methionine-binding residues include tryptophan 66, tyrosine 70, glycine 140, aspartate 165, aspartate 191, and isoleucine 212.

This sequence belongs to the methyltransferase superfamily. METL family. Monomer.

It is found in the cytoplasm. It carries out the reaction cytidine(32) in tRNA(Thr) + S-adenosyl-L-methionine = N(3)-methylcytidine(32) in tRNA(Thr) + S-adenosyl-L-homocysteine + H(+). The enzyme catalyses cytidine(32) in tRNA(Arg)(CCU) + S-adenosyl-L-methionine = N(3)-methylcytidine(32) in tRNA(Arg)(CCU) + S-adenosyl-L-homocysteine + H(+). Its function is as follows. S-adenosyl-L-methionine-dependent methyltransferase that mediates N(3)-methylcytidine modification of residue 32 of the tRNA anticodon loop of tRNA(Thr)(UGU) and tRNA(Arg)(CCU). N(3)-methylcytidine methylation by mettl2 requires the N6-threonylcarbamoylation of tRNA (t6A37) by the EKC/KEOPS complex as prerequisite. This chain is tRNA N(3)-cytidine methyltransferase METTL2 (mettl2), found in Xenopus tropicalis (Western clawed frog).